A 441-amino-acid chain; its full sequence is RUN domain-containing protein 3A (441 aa).

The segment at 1–293 is interaction with RAP2A; it reads MEASFVQTTM…LQLQLEEAAA (293 aa). Positions 52–184 constitute an RUN domain; the sequence is DDSSEEFVNF…IDFSFCLKGE (133 aa). Threonine 210 bears the Phosphothreonine mark. Residues 211-234 are disordered; it reads DEEERHSAESSTSEDNSPEHPYLP. Phosphoserine is present on serine 227. The stretch at 262–317 forms a coiled coil; that stretch reads YLEELVRLRESQLKDLEAENRRLQLQLEEAAAQNQREKRELEGVILELQEQLTGLI. Positions 367-379 are enriched in polar residues; it reads PLSAEASLSSDSQ. The tract at residues 367-399 is disordered; sequence PLSAEASLSSDSQRLGEGKRDEEPWGPIGKDPT. A compositionally biased stretch (basic and acidic residues) spans 380 to 389; sequence RLGEGKRDEE. Phosphoserine is present on residues serine 411 and serine 414.

The protein belongs to the RUNDC3 family. As to quaternary structure, interacts with the GTP-bound form of RAP2A.

Its function is as follows. May act as an effector of RAP2A in neuronal cells. In Bos taurus (Bovine), this protein is RUN domain-containing protein 3A (RUNDC3A).